A 534-amino-acid chain; its full sequence is NAD(P)H-quinone oxidoreductase chain 4 (534 aa).

The next 14 membrane-spanning stretches (helical) occupy residues 6–26 (FPWLSTLIFFPIMATVALPFI), 38–58 (WYALVIGLIDFVLLIYAFYTQ), 91–111 (MPLILLTGFITSLAILASWPV), 117–137 (LFYFLILAMYGGQIAVFAVQD), 138–158 (LLVFFLVWELELVPVYLLLSI), 171–191 (FILYTAISSLFILVAALAMAF), 214–234 (LLCYTGFLVAFAVKLPIVPLH), 245–265 (TAPVHMLLAGILLKMGGYALI), 279–299 (FAPALIILGVVNIIYAALTSF), 316–336 (MGFVLIGIASFTDLGMSGAVL), 337–357 (QMVSHGLIGASLFFLVGATYD), 377–399 (IFAMFTTCSMASLALPGMSGFVA), 419–439 (VPVVILAGIGVILTPIYLLSM), and 466–486 (IFVIACLLVPIIGIGLYPKII).

This sequence belongs to the complex I subunit 4 family.

The protein localises to the cellular thylakoid membrane. It catalyses the reaction a plastoquinone + NADH + (n+1) H(+)(in) = a plastoquinol + NAD(+) + n H(+)(out). The catalysed reaction is a plastoquinone + NADPH + (n+1) H(+)(in) = a plastoquinol + NADP(+) + n H(+)(out). Its function is as follows. NDH-1 shuttles electrons from NAD(P)H, via FMN and iron-sulfur (Fe-S) centers, to quinones in the respiratory chain. The immediate electron acceptor for the enzyme in this species is believed to be plastoquinone. Couples the redox reaction to proton translocation (for every two electrons transferred, four hydrogen ions are translocated across the cytoplasmic membrane), and thus conserves the redox energy in a proton gradient. This is NAD(P)H-quinone oxidoreductase chain 4 from Acaryochloris marina (strain MBIC 11017).